The primary structure comprises 178 residues: Adenine phosphoribosyltransferase (178 aa).

Belongs to the purine/pyrimidine phosphoribosyltransferase family. In terms of assembly, homodimer.

Its subcellular location is the cytoplasm. The catalysed reaction is AMP + diphosphate = 5-phospho-alpha-D-ribose 1-diphosphate + adenine. Its pathway is purine metabolism; AMP biosynthesis via salvage pathway; AMP from adenine: step 1/1. Catalyzes a salvage reaction resulting in the formation of AMP, that is energically less costly than de novo synthesis. The protein is Adenine phosphoribosyltransferase of Bacteroides fragilis (strain YCH46).